Here is a 391-residue protein sequence, read N- to C-terminus: Phosphoglycerate kinase (391 aa).

Residues 21-23, Arg-36, 59-62, Arg-113, and Arg-146 contribute to the substrate site; these read DLN and HLGR. Residues Lys-197, Glu-319, and 345 to 348 contribute to the ATP site; that span reads GGDT.

It belongs to the phosphoglycerate kinase family. As to quaternary structure, monomer.

Its subcellular location is the cytoplasm. The catalysed reaction is (2R)-3-phosphoglycerate + ATP = (2R)-3-phospho-glyceroyl phosphate + ADP. It participates in carbohydrate degradation; glycolysis; pyruvate from D-glyceraldehyde 3-phosphate: step 2/5. The polypeptide is Phosphoglycerate kinase (Shewanella sp. (strain W3-18-1)).